The sequence spans 426 residues: Histidine--tRNA ligase (426 aa).

Belongs to the class-II aminoacyl-tRNA synthetase family. Homodimer.

Its subcellular location is the cytoplasm. It catalyses the reaction tRNA(His) + L-histidine + ATP = L-histidyl-tRNA(His) + AMP + diphosphate + H(+). This Lactiplantibacillus plantarum (strain ATCC BAA-793 / NCIMB 8826 / WCFS1) (Lactobacillus plantarum) protein is Histidine--tRNA ligase.